The chain runs to 157 residues: 2-C-methyl-D-erythritol 2,4-cyclodiphosphate synthase (157 aa).

2 residues coordinate a divalent metal cation: Asp9 and His11. Residues 9-11 (DVH) and 35-36 (HS) each bind 4-CDP-2-C-methyl-D-erythritol 2-phosphate. A divalent metal cation is bound at residue His43. Residues 57–59 (DIG), 62–66 (FPETD), 133–136 (TTME), Phe140, and Lys143 each bind 4-CDP-2-C-methyl-D-erythritol 2-phosphate.

It belongs to the IspF family. In terms of assembly, homotrimer. A divalent metal cation is required as a cofactor.

It catalyses the reaction 4-CDP-2-C-methyl-D-erythritol 2-phosphate = 2-C-methyl-D-erythritol 2,4-cyclic diphosphate + CMP. It participates in isoprenoid biosynthesis; isopentenyl diphosphate biosynthesis via DXP pathway; isopentenyl diphosphate from 1-deoxy-D-xylulose 5-phosphate: step 4/6. Involved in the biosynthesis of isopentenyl diphosphate (IPP) and dimethylallyl diphosphate (DMAPP), two major building blocks of isoprenoid compounds. Catalyzes the conversion of 4-diphosphocytidyl-2-C-methyl-D-erythritol 2-phosphate (CDP-ME2P) to 2-C-methyl-D-erythritol 2,4-cyclodiphosphate (ME-CPP) with a corresponding release of cytidine 5-monophosphate (CMP). This is 2-C-methyl-D-erythritol 2,4-cyclodiphosphate synthase from Enterococcus faecalis (strain ATCC 700802 / V583).